A 911-amino-acid chain; its full sequence is Protein translocase subunit SecA (911 aa).

ATP-binding positions include Gln-87, 105–109, and Asp-499; that span reads GEGKT. The Zn(2+) site is built by Cys-895, Cys-897, Cys-906, and His-907.

The protein belongs to the SecA family. As to quaternary structure, monomer and homodimer. Part of the essential Sec protein translocation apparatus which comprises SecA, SecYEG and auxiliary proteins SecDF-YajC and YidC. Requires Zn(2+) as cofactor.

The protein localises to the cell inner membrane. It is found in the cytoplasm. The enzyme catalyses ATP + H2O + cellular proteinSide 1 = ADP + phosphate + cellular proteinSide 2.. Part of the Sec protein translocase complex. Interacts with the SecYEG preprotein conducting channel. Has a central role in coupling the hydrolysis of ATP to the transfer of proteins into and across the cell membrane, serving both as a receptor for the preprotein-SecB complex and as an ATP-driven molecular motor driving the stepwise translocation of polypeptide chains across the membrane. The chain is Protein translocase subunit SecA from Novosphingobium aromaticivorans (strain ATCC 700278 / DSM 12444 / CCUG 56034 / CIP 105152 / NBRC 16084 / F199).